A 404-amino-acid polypeptide reads, in one-letter code: Cysteine desulfurase IscS (404 aa).

Residues A75–T76, N155, Q183, and S203–H205 each bind pyridoxal 5'-phosphate. K206 carries the post-translational modification N6-(pyridoxal phosphate)lysine. Pyridoxal 5'-phosphate is bound at residue T243. Catalysis depends on C328, which acts as the Cysteine persulfide intermediate. Position 328 (C328) interacts with [2Fe-2S] cluster.

This sequence belongs to the class-V pyridoxal-phosphate-dependent aminotransferase family. NifS/IscS subfamily. Homodimer. Forms a heterotetramer with IscU, interacts with other sulfur acceptors. Requires pyridoxal 5'-phosphate as cofactor.

The protein resides in the cytoplasm. It catalyses the reaction (sulfur carrier)-H + L-cysteine = (sulfur carrier)-SH + L-alanine. Its pathway is cofactor biosynthesis; iron-sulfur cluster biosynthesis. In terms of biological role, master enzyme that delivers sulfur to a number of partners involved in Fe-S cluster assembly, tRNA modification or cofactor biosynthesis. Catalyzes the removal of elemental sulfur atoms from cysteine to produce alanine. Functions as a sulfur delivery protein for Fe-S cluster synthesis onto IscU, an Fe-S scaffold assembly protein, as well as other S acceptor proteins. This Pseudomonas entomophila (strain L48) protein is Cysteine desulfurase IscS.